The sequence spans 127 residues: Classical arabinogalactan protein 10 (127 aa).

Residues 1 to 21 (MASKSVVVLLFLALIASSAIA) form the signal peptide. Glutamine 22 carries the post-translational modification Pyrrolidone carboxylic acid. The interval 22-107 (QAPGPAPTRS…TGSTPVDNNN (86 aa)) is disordered. 4-hydroxyproline is present on residues proline 24, proline 26, proline 28, proline 32, and proline 36. Proline 24, proline 26, proline 28, proline 32, and proline 36 each carry an O-linked (Ara...) hydroxyproline glycan. Pro residues-rich tracts occupy residues 25 to 39 (GPAPTRSPLPSPAQP), 48 to 58 (SITPTPTPTPS), and 66 to 86 (VSPPAGSPLPSSASPPAPPTS). Positions 98–107 (TGSTPVDNNN) are enriched in polar residues. Residue asparagine 107 is the site of GPI-anchor amidated asparagine attachment. The propeptide at 108-127 (AATLAAGSLAGFVFVASLLL) is removed in mature form.

It belongs to the classical AGP family. In terms of processing, O-glycosylated on hydroxyprolines; noncontiguous hydroxylproline residues are glycosylated with arabinogalactan. In terms of tissue distribution, predominantly expressed in flowers and at a lower level in roots and siliques.

The protein localises to the cell membrane. Functionally, proteoglycan that seems to be implicated in diverse developmental roles such as differentiation, cell-cell recognition, embryogenesis and programmed cell death. In Arabidopsis thaliana (Mouse-ear cress), this protein is Classical arabinogalactan protein 10 (AGP10).